A 265-amino-acid chain; its full sequence is Tryptophan synthase alpha chain (265 aa).

Active-site proton acceptor residues include Glu-49 and Asp-60.

This sequence belongs to the TrpA family. In terms of assembly, tetramer of two alpha and two beta chains.

It catalyses the reaction (1S,2R)-1-C-(indol-3-yl)glycerol 3-phosphate + L-serine = D-glyceraldehyde 3-phosphate + L-tryptophan + H2O. Its pathway is amino-acid biosynthesis; L-tryptophan biosynthesis; L-tryptophan from chorismate: step 5/5. Its function is as follows. The alpha subunit is responsible for the aldol cleavage of indoleglycerol phosphate to indole and glyceraldehyde 3-phosphate. The sequence is that of Tryptophan synthase alpha chain from Cupriavidus metallidurans (strain ATCC 43123 / DSM 2839 / NBRC 102507 / CH34) (Ralstonia metallidurans).